The sequence spans 324 residues: Alkanal monooxygenase beta chain (324 aa).

Belongs to the bacterial luciferase oxidoreductase family. Heterodimer of an alpha and a beta chain.

It carries out the reaction a long-chain fatty aldehyde + FMNH2 + O2 = a long-chain fatty acid + hnu + FMN + H2O + 2 H(+). Light-emitting reaction in luminous bacteria. The specific role of the beta subunit is unknown, but it is absolutely required for bioluminescence activity. The chain is Alkanal monooxygenase beta chain (luxB) from Photorhabdus laumondii subsp. laumondii (strain DSM 15139 / CIP 105565 / TT01) (Photorhabdus luminescens subsp. laumondii).